A 291-amino-acid polypeptide reads, in one-letter code: NAD kinase (291 aa).

Asp55 serves as the catalytic Proton acceptor. NAD(+) is bound by residues 55 to 56, Arg60, 130 to 131, Asp160, and 171 to 176; these read DG, NE, and TAYAFS.

This sequence belongs to the NAD kinase family. It depends on a divalent metal cation as a cofactor.

The protein localises to the cytoplasm. The catalysed reaction is NAD(+) + ATP = ADP + NADP(+) + H(+). Its function is as follows. Involved in the regulation of the intracellular balance of NAD and NADP, and is a key enzyme in the biosynthesis of NADP. Catalyzes specifically the phosphorylation on 2'-hydroxyl of the adenosine moiety of NAD to yield NADP. In Corynebacterium glutamicum (strain ATCC 13032 / DSM 20300 / JCM 1318 / BCRC 11384 / CCUG 27702 / LMG 3730 / NBRC 12168 / NCIMB 10025 / NRRL B-2784 / 534), this protein is NAD kinase.